The primary structure comprises 285 residues: Ribosomal RNA small subunit methyltransferase I (285 aa).

This sequence belongs to the methyltransferase superfamily. RsmI family.

The protein localises to the cytoplasm. It carries out the reaction cytidine(1402) in 16S rRNA + S-adenosyl-L-methionine = 2'-O-methylcytidine(1402) in 16S rRNA + S-adenosyl-L-homocysteine + H(+). Its function is as follows. Catalyzes the 2'-O-methylation of the ribose of cytidine 1402 (C1402) in 16S rRNA. The polypeptide is Ribosomal RNA small subunit methyltransferase I (Mycobacterium tuberculosis (strain ATCC 25618 / H37Rv)).